Here is a 356-residue protein sequence, read N- to C-terminus: Terpene synthase 10 (356 aa).

Residues 90–95 carry the DDxx(x)D/E motif motif; that stretch reads DDYLDS. The NDxxSxxxD/E motif signature appears at 232 to 240; it reads NDAVSYAKE.

The protein belongs to the terpene synthase family.

It carries out the reaction geranylgeranyl diphosphate = beta-araneosene + diphosphate. In terms of biological role, terpene synthase that converts its substrate farnesyl diphosphate (FPP) into several unidentified sesquiterpenes. TPS10 also converts geranylgeranyl diphosphate (GGPP) into the diterpene beta-araneosene. The protein is Terpene synthase 10 of Dictyostelium purpureum (Slime mold).